The chain runs to 196 residues: UMP-CMP kinase (196 aa).

Residue 13–18 coordinates ATP; it reads GAGKGT. Ser-33 is modified (phosphoserine). The segment at 33–63 is NMP; it reads SAGELLRDERKNPDSQYGELIEKYIKEGKIV. Arg-39 serves as a coordination point for a ribonucleoside 5'-phosphate. An N6-acetyllysine mark is found at Lys-43 and Lys-55. 61–63 provides a ligand contact to a ribonucleoside 5'-phosphate; sequence KIV. A Glycyl lysine isopeptide (Lys-Gly) (interchain with G-Cter in SUMO2) cross-link involves residue Lys-73. Position 93–96 (93–96) interacts with a ribonucleoside 5'-phosphate; it reads GFPR. CMP is bound at residue Asn-100. Lys-106 bears the N6-succinyllysine mark. The segment at 133–143 is LID; the sequence is ERGKSSGRSDD. Arg-134 contributes to the ATP binding site. A ribonucleoside 5'-phosphate is bound by residues Arg-140 and Arg-151. Lys-179 is an ATP binding site. At Ser-180 the chain carries Phosphoserine.

This sequence belongs to the adenylate kinase family. UMP-CMP kinase subfamily. In terms of assembly, monomer. Requires Mg(2+) as cofactor.

The protein resides in the nucleus. The protein localises to the cytoplasm. It catalyses the reaction CMP + ATP = CDP + ADP. It carries out the reaction dCMP + ATP = dCDP + ADP. The enzyme catalyses UMP + ATP = UDP + ADP. The catalysed reaction is a 2'-deoxyribonucleoside 5'-diphosphate + ATP = a 2'-deoxyribonucleoside 5'-triphosphate + ADP. It catalyses the reaction a ribonucleoside 5'-diphosphate + ATP = a ribonucleoside 5'-triphosphate + ADP. Catalyzes the phosphorylation of pyrimidine nucleoside monophosphates at the expense of ATP. Plays an important role in de novo pyrimidine nucleotide biosynthesis. Has preference for UMP and CMP as phosphate acceptors. Also displays broad nucleoside diphosphate kinase activity. The polypeptide is UMP-CMP kinase (Cmpk1) (Mus musculus (Mouse)).